Consider the following 734-residue polypeptide: Terpene cyclase/mutase ntnI (734 aa).

Residues 1 to 12 are compositionally biased toward polar residues; sequence MQSHIGQWTSTA. Residues 1-26 form a disordered region; it reads MQSHIGQWTSTAKGHLSRDENGDEKT. Over residues 16 to 26 the composition is skewed to basic and acidic residues; sequence LSRDENGDEKT. PFTB repeat units lie at residues 130 to 172, 493 to 534, 570 to 610, and 619 to 668; these read AIEI…RLLG, LHNA…SGKT, RTRG…ALAG, and SRKG…GLMH.

This sequence belongs to the terpene cyclase/mutase family.

Its pathway is secondary metabolite biosynthesis; terpenoid biosynthesis. In terms of biological role, terpene cyclase/mutase; part of the gene cluster that mediates the biosynthesis of the meroterpenoids nectripenoids A and B, as well as cochliquninone D and isocochliquninone E. The pathway probably begins with the HR-PKS ntnH that catalyzes two chain-extension steps to form a reduced triketide, which then primes the SAT domain in the NR-PKS ntnG to initiate three more cycles of extension to give a linear hexaketide corresponding to the polyketide part of nectripenoids. The FAD-dependent monooxygenase ntnJ then performs an oxidative decarboxylation at C11 of the ntnH/ntnG product, via an electrophilic aromatic hydroxylation with concomitant ipso-decarboxylation. The membrane-bound polyprenyl transferase ntnF then introduces a farnesyl group before the FAD-dependent monooxygenase ntnK functions as the first epoxidase on terminal C12'-C13' olefin, followed by a second epoxidation on C7'-C8' catalyzed by ntnA. The terpene cyclase/mutase ntnI then initiates the sequential tricyclic ring formation through protonation of the terminal epoxide and catalyzes the regioselective and stereoselective 6/6/6-tricyclic ring formation. The cytochrome P450 monooxygenase ntnM may then hydroxylate C1'. This Nectria sp protein is Terpene cyclase/mutase ntnI.